A 611-amino-acid polypeptide reads, in one-letter code: Sodium-coupled monocarboxylate transporter 1 (611 aa).

Over 1–9 the chain is Extracellular; sequence MDASRDIGS. The helical transmembrane segment at 10 to 30 threads the bilayer; the sequence is FVVWDYVVFAGMLLISAAIGI. Over 31–51 the chain is Cytoplasmic; sequence YYAFAGGGQQTSKDFLMGGRS. The chain crosses the membrane as a helical span at residues 52–72; it reads MSAVPVALSLTASFMSAVTVL. Over 73-86 the chain is Extracellular; the sequence is GTPAEVYRFGAIFS. Residues 87 to 107 form a helical membrane-spanning segment; that stretch reads IFVITYFFVVVISAEVFLPVF. Topologically, residues 108 to 132 are cytoplasmic; sequence YRLGITSTYEYLELRFNRCIRLCGT. The helical transmembrane segment at 133-153 threads the bilayer; that stretch reads ILFIVQTILYTGIVIYAPALA. Over 154–161 the chain is Extracellular; that stretch reads LNQVTGFD. A helical transmembrane segment spans residues 162 to 182; that stretch reads LWGAVVATGVVCTFYCTLGGL. The Cytoplasmic portion of the chain corresponds to 183–184; it reads KA. A helical membrane pass occupies residues 185–205; sequence VVWTDVFQVGIMVAGFASVII. The Extracellular segment spans residues 206-239; that stretch reads QASITQHGINKILSDAFNGGRLNFWNFDPNPLQR. The chain crosses the membrane as a helical span at residues 240 to 260; the sequence is HTFWTIVIGGTFTWTTIYGVN. The Cytoplasmic segment spans residues 261 to 279; that stretch reads QSQVQRYISCKSRLHAKLS. A helical transmembrane segment spans residues 280–300; that stretch reads LYVNLVGLWVILTCSIFCGLA. Topologically, residues 301-336 are extracellular; that stretch reads LYSRYRECDPWTSKKVSAIDQLMPYLVLDILKNYPG. A helical membrane pass occupies residues 337 to 359; that stretch reads VPGLFVACAYSGTLSTVSSSINA. Topologically, residues 360–389 are cytoplasmic; sequence LAAVTVEDLIKPRFKSLSEKSLSWISQGMS. Residues 390 to 410 form a helical membrane-spanning segment; the sequence is VLYGALCIGMAALASLMGALL. The Extracellular segment spans residues 411 to 415; sequence QAALS. Residues 416-436 traverse the membrane as a helical segment; the sequence is IFGMVGGPLLGLFSLGILVPF. At 437 to 439 the chain is on the cytoplasmic side; sequence ANS. A helical transmembrane segment spans residues 440-460; the sequence is IGALTGLLAGFAISLWVGIGA. Over 461-518 the chain is Extracellular; it reads QLYPPLPERTLPLPLETYGCNITHNGSDWMSTTEMPFSTSAFQIHNAERTPLMDNWYS. Residue N485 is glycosylated (N-linked (GlcNAc...) asparagine). The helical transmembrane segment at 519-539 threads the bilayer; that stretch reads LSYLYFSTIGTLTTLFVGILI. The Cytoplasmic portion of the chain corresponds to 540 to 611; the sequence is SLSTGGRKQN…HSGKINGTRL (72 aa). The PDZ-binding motif lies at 609 to 611; that stretch reads TRL.

Belongs to the sodium:solute symporter (SSF) (TC 2.A.21) family. In terms of assembly, interacts (via PDZ-binding motif) with PDZK1 (via PDZ domains 1 and 3); interaction increases nicotinate transport activity of SLC5A8. As to expression, expressed in brain, colon, kidney and in the ileum and jejunum of small intestine. In the kidney, expression occurred in the proximal tubule and the loop of Henle, being restricted to tubular epithelial cells in both the cortex and the medulla. In the colon, predominantly expressed in the distal half of the large bowel and in the most terminal ileum. Localized selectively in the luminal surface of crypts in the large intestine and to the brush border in the middle parts of crypts in the cecum. In the brain, expression was seen throughout, exclusively in neurons, including the cortex, hippocampus, cerebellum and pituitary gland (at protein level). Expression is reduced in oligodendrogliomas.

The protein localises to the apical cell membrane. It carries out the reaction (S)-lactate(out) + 2 Na(+)(out) = (S)-lactate(in) + 2 Na(+)(in). The enzyme catalyses propanoate(out) + 2 Na(+)(out) = propanoate(in) + 2 Na(+)(in). It catalyses the reaction pyruvate(out) + 2 Na(+)(out) = pyruvate(in) + 2 Na(+)(in). The catalysed reaction is acetate(out) + 2 Na(+)(out) = acetate(in) + 2 Na(+)(in). It carries out the reaction butanoate(out) + 2 Na(+)(out) = butanoate(in) + 2 Na(+)(in). The enzyme catalyses nicotinate(out) + 2 Na(+)(out) = nicotinate(in) + 2 Na(+)(in). It catalyses the reaction (R)-3-hydroxybutanoate(out) + 2 Na(+)(out) = (R)-3-hydroxybutanoate(in) + 2 Na(+)(in). The catalysed reaction is acetoacetate(out) + 2 Na(+)(out) = acetoacetate(in) + 2 Na(+)(in). It carries out the reaction 4-methyl-2-oxopentanoate(out) + 2 Na(+)(out) = 4-methyl-2-oxopentanoate(in) + 2 Na(+)(in). The enzyme catalyses 5-oxo-L-proline(out) + 2 Na(+)(out) = 5-oxo-L-proline(in) + 2 Na(+)(in). It catalyses the reaction iodide(out) = iodide(in). The catalysed reaction is chloride(in) = chloride(out). It carries out the reaction nitrate(in) = nitrate(out). The enzyme catalyses bromide(in) = bromide(out). Transport of D-lactate and pyruvate stimulated by alpha-cyano-4-hydroxycinnamic acid, but inhibited by the short-chain fatty acids acetate, propionate and butyrate. Its function is as follows. Acts as an electrogenic sodium (Na(+)) and chloride (Cl-)-dependent sodium-coupled solute transporter, including transport of monocarboxylates (short-chain fatty acids including L-lactate, D-lactate, pyruvate, acetate, propionate, valerate and butyrate), mocarboxylate drugs (nicotinate, benzoate, salicylate and 5-aminosalicylate) and ketone bodies (beta-D-hydroxybutyrate, acetoacetate and alpha-ketoisocaproate), with a Na(+):substrate stoichiometry of between 4:1 and 2:1. Catalyzes passive carrier mediated diffusion of iodide. Mediates iodide transport from the thyrocyte into the colloid lumen through the apical membrane. May be responsible for the absorption of D-lactate and monocarboxylate drugs from the intestinal tract. May play a critical role in the entry of L-lactate and ketone bodies into neurons by a process driven by an electrochemical Na(+) gradient and hence contribute to the maintenance of the energy status and function of neurons. Mediates sodium-coupled electrogenic transport of pyroglutamate (5-oxo-L-proline). Can mediate the transport of chloride, bromide, iodide and nitrate ions when external concentration of sodium ions is reduced. This is Sodium-coupled monocarboxylate transporter 1 from Mus musculus (Mouse).